Reading from the N-terminus, the 1050-residue chain is Toluene efflux pump membrane transporter TtgB (1050 aa).

Transmembrane regions (helical) follow at residues Ile10 to Leu30, Gly339 to Leu359, Met370 to Ile390, Leu393 to Val413, Gly440 to Gly460, Ile472 to Leu492, Val539 to Ile559, Met871 to Glu891, Trp893 to Ala913, Val923 to Ile943, Ile972 to Ala992, and Val1004 to Val1024.

This sequence belongs to the resistance-nodulation-cell division (RND) (TC 2.A.6) family.

The protein resides in the cell inner membrane. Its function is as follows. The inner membrane transporter component of a constitutive organic solvent efflux system. Involved in export of toluene, styrene, m-xylene, propylbenzene and ethylbenzene. Also exports AMP and the antibiotics carbenicillin, nalidixic acid, chloramphenicol and tetracycline. This is Toluene efflux pump membrane transporter TtgB (ttgB) from Pseudomonas putida (strain DOT-T1E).